We begin with the raw amino-acid sequence, 353 residues long: Melanin-concentrating hormone receptor 1 (353 aa).

Residues 1–29 (MDLEASLLPTGPNASNTSDGPDNLTSAGS) form a disordered region. At 1–44 (MDLEASLLPTGPNASNTSDGPDNLTSAGSPPRTGSISYINIIMP) the chain is on the extracellular side. Residues 12 to 29 (PNASNTSDGPDNLTSAGS) show a composition bias toward polar residues. N-linked (GlcNAc...) asparagine glycosylation is found at N13, N16, and N23. The chain crosses the membrane as a helical span at residues 45–67 (SVFGTICLLGIIGNSTVIFAVVK). The Cytoplasmic segment spans residues 68-79 (KSKLHWCNNVPD). A helical membrane pass occupies residues 80–102 (IFIINLSVVDLLFLLGMPFMIHQ). Topologically, residues 103 to 116 (LMGNGVWHFGETMC) are extracellular. The cysteines at positions 116 and 194 are disulfide-linked. Residues 117–139 (TLITAMDANSQFTSTYILTAMAI) form a helical membrane-spanning segment. At 140–158 (DRYLATVHPISSTKFRKPS) the chain is on the cytoplasmic side. The chain crosses the membrane as a helical span at residues 159 to 181 (VATLVICLLWALSFISITPVWLY). Topologically, residues 182–209 (ARLIPFPGGAVGCGIRLPNPDTDLYWFT) are extracellular. Residues 210–232 (LYQFFLAFALPFVVITAAYVRIL) traverse the membrane as a helical segment. Topologically, residues 233–252 (QRMTSSVAPASQRSIRLRTK) are cytoplasmic. The chain crosses the membrane as a helical span at residues 253 to 275 (RVTRTAIAICLVFFVCWAPYYVL). Over 276–289 (QLTQLSISRPTLTF) the chain is Extracellular. A helical membrane pass occupies residues 290–312 (VYLYNAAISLGYANSCLNPFVYI). The Cytoplasmic portion of the chain corresponds to 313–353 (VLCETFRKRLVLSVKPAAQGQLRAVSNAQTADEERTESKGT).

The protein belongs to the G-protein coupled receptor 1 family. Interacts with NCDN. In terms of tissue distribution, highest level in brain, particularly in the frontal cortex and hypothalamus, lower levels in the liver and heart.

The protein resides in the cell membrane. Receptor for melanin-concentrating hormone, coupled to both G proteins that inhibit adenylyl cyclase and G proteins that activate phosphoinositide hydrolysis. In Homo sapiens (Human), this protein is Melanin-concentrating hormone receptor 1.